The primary structure comprises 153 residues: Interleukin-2 (153 aa).

A signal peptide spans 1 to 20 (MYKVQLLSCIALTLALLTSS). O-linked (GalNAc...) threonine glycosylation occurs at T23. C78 and C125 are disulfide-bonded. N-linked (GlcNAc...) asparagine glycosylation occurs at N111.

Belongs to the IL-2 family.

The protein localises to the secreted. Its function is as follows. Cytokine produced by activated CD4-positive helper T-cells and to a lesser extend activated CD8-positive T-cells and natural killer (NK) cells that plays pivotal roles in the immune response and tolerance. Binds to a receptor complex composed of either the high-affinity trimeric IL-2R (IL2RA/CD25, IL2RB/CD122 and IL2RG/CD132) or the low-affinity dimeric IL-2R (IL2RB and IL2RG). Interaction with the receptor leads to oligomerization and conformation changes in the IL-2R subunits resulting in downstream signaling starting with phosphorylation of JAK1 and JAK3. In turn, JAK1 and JAK3 phosphorylate the receptor to form a docking site leading to the phosphorylation of several substrates including STAT5. This process leads to activation of several pathways including STAT, phosphoinositide-3-kinase/PI3K and mitogen-activated protein kinase/MAPK pathways. Functions as a T-cell growth factor and can increase NK-cell cytolytic activity as well. Promotes strong proliferation of activated B-cells and subsequently immunoglobulin production. Plays a pivotal role in regulating the adaptive immune system by controlling the survival and proliferation of regulatory T-cells, which are required for the maintenance of immune tolerance. Moreover, participates in the differentiation and homeostasis of effector T-cell subsets, including Th1, Th2, Th17 as well as memory CD8-positive T-cells. In Oryctolagus cuniculus (Rabbit), this protein is Interleukin-2 (IL2).